Reading from the N-terminus, the 261-residue chain is Chitinase 8 (261 aa).

The first 29 residues, methionine 1–alanine 29, serve as a signal peptide directing secretion. 2 cysteine pairs are disulfide-bonded: cysteine 53–cysteine 115 and cysteine 221–cysteine 253. Residue glutamate 98 is the Proton donor of the active site.

The protein belongs to the glycosyl hydrolase 19 family. Chitinase class II subfamily. Expressed in roots, leaves, sheaths and meristems.

The catalysed reaction is Random endo-hydrolysis of N-acetyl-beta-D-glucosaminide (1-&gt;4)-beta-linkages in chitin and chitodextrins.. This Oryza sativa subsp. japonica (Rice) protein is Chitinase 8 (Cht8).